We begin with the raw amino-acid sequence, 150 residues long: 3-hydroxyacyl-[acyl-carrier-protein] dehydratase FabZ (150 aa).

Histidine 52 is an active-site residue.

It belongs to the thioester dehydratase family. FabZ subfamily.

It is found in the cytoplasm. The enzyme catalyses a (3R)-hydroxyacyl-[ACP] = a (2E)-enoyl-[ACP] + H2O. Involved in unsaturated fatty acids biosynthesis. Catalyzes the dehydration of short chain beta-hydroxyacyl-ACPs and long chain saturated and unsaturated beta-hydroxyacyl-ACPs. The protein is 3-hydroxyacyl-[acyl-carrier-protein] dehydratase FabZ of Albidiferax ferrireducens (strain ATCC BAA-621 / DSM 15236 / T118) (Rhodoferax ferrireducens).